The primary structure comprises 62 residues: uncharacterized protein (62 aa).

This is an uncharacterized protein from Sulfolobus islandicus filamentous virus (isolate Iceland/Hveragerdi) (SIFV).